We begin with the raw amino-acid sequence, 115 residues long: Transcription and mRNA export factor ENY2 (115 aa).

It belongs to the ENY2 family. In terms of assembly, component of a deubiquitination module (DUB module) formed by ENY2, SGF11, and UBP22 in Arabidopsis. Interacts directly with SGF11, but not with UBP22. Interacts with MOS4. In terms of tissue distribution, expressed in roots, cotyledons, leaves and upper part of sepals.

The protein resides in the nucleus. It is found in the nucleoplasm. Functionally, component of a deubiquitination module (DUB module) that specifically deubiquinates monoubiquinated histone H2B (H2Bub). Does not seem to be a component of the TREX-2 complex. Seems to act independently of the SAGA multiprotein complex. The DUB module is responsible for the major H2Bub deubiquitinase activity in Arabidopsis. The protein is Transcription and mRNA export factor ENY2 of Arabidopsis thaliana (Mouse-ear cress).